The primary structure comprises 586 residues: Arginine--tRNA ligase (586 aa).

The 'HIGH' region motif lies at 131–141; it reads ANPTGPMHVGH.

The protein belongs to the class-I aminoacyl-tRNA synthetase family. As to quaternary structure, monomer.

Its subcellular location is the cytoplasm. The enzyme catalyses tRNA(Arg) + L-arginine + ATP = L-arginyl-tRNA(Arg) + AMP + diphosphate. The chain is Arginine--tRNA ligase from Xanthobacter autotrophicus (strain ATCC BAA-1158 / Py2).